A 141-amino-acid polypeptide reads, in one-letter code: MIVSNKHARRNYELLDFFECGIVLKGTEVKSISRANCSINEAYVQIIKNQALILNMHVANFFEGNNFNQDPYRNRKLLLHKKEIIRLQHLVKTQHMTIVPTKIYWKNNKLKIEIALGKGKQLHDKREDIKKRDLARETRLF.

Belongs to the SmpB family.

Its subcellular location is the cytoplasm. Required for rescue of stalled ribosomes mediated by trans-translation. Binds to transfer-messenger RNA (tmRNA), required for stable association of tmRNA with ribosomes. tmRNA and SmpB together mimic tRNA shape, replacing the anticodon stem-loop with SmpB. tmRNA is encoded by the ssrA gene; the 2 termini fold to resemble tRNA(Ala) and it encodes a 'tag peptide', a short internal open reading frame. During trans-translation Ala-aminoacylated tmRNA acts like a tRNA, entering the A-site of stalled ribosomes, displacing the stalled mRNA. The ribosome then switches to translate the ORF on the tmRNA; the nascent peptide is terminated with the 'tag peptide' encoded by the tmRNA and targeted for degradation. The ribosome is freed to recommence translation, which seems to be the essential function of trans-translation. The chain is SsrA-binding protein from Ureaplasma parvum serovar 3 (strain ATCC 27815 / 27 / NCTC 11736).